The primary structure comprises 314 residues: tRNA dimethylallyltransferase (314 aa).

13-20 lines the ATP pocket; sequence GPTASGKS. 15–20 provides a ligand contact to substrate; sequence TASGKS. Interaction with substrate tRNA stretches follow at residues 38–41 and 161–165; these read DSMQ and QRIAR.

Belongs to the IPP transferase family. As to quaternary structure, monomer. It depends on Mg(2+) as a cofactor.

It carries out the reaction adenosine(37) in tRNA + dimethylallyl diphosphate = N(6)-dimethylallyladenosine(37) in tRNA + diphosphate. Functionally, catalyzes the transfer of a dimethylallyl group onto the adenine at position 37 in tRNAs that read codons beginning with uridine, leading to the formation of N6-(dimethylallyl)adenosine (i(6)A). This is tRNA dimethylallyltransferase from Parvibaculum lavamentivorans (strain DS-1 / DSM 13023 / NCIMB 13966).